The following is a 284-amino-acid chain: Homeobox-leucine zipper protein HAT4 (284 aa).

A compositionally biased stretch (polar residues) spans 48-59 (ESFTSSVPNSDS). Residues 48-132 (ESFTSSVPNS…DGDNSRKKLR (85 aa)) form a disordered region. Residues 89–100 (VSSPNSTVSSST) show a composition bias toward low complexity. The segment at residues 126–185 (NSRKKLRLSKDQSAILEETFKDHSTLNPKQKQALAKQLGLRARQVEVWFQNRRARTKLKQ) is a DNA-binding region (homeobox). The interval 193–214 (LRRCCENLTEENRRLQKEVTEL) is leucine-zipper.

It belongs to the HD-ZIP homeobox family. Class II subfamily. As to quaternary structure, interacts with DNA as homodimer. In terms of tissue distribution, predominantly expressed in leaves and stems.

It localises to the nucleus. Its function is as follows. Probable transcription factor involved in the negative regulation of cell elongation and specific cell proliferation processes such as lateral root formation and secondary growth of the vascular system. Acts as a mediator of the red/far-red light effects on leaf cell expansion in the shading response. Binds to the DNA sequence 5'-CAAT[GC]ATTG-3'. Negatively regulates its own expression. The protein is Homeobox-leucine zipper protein HAT4 (HAT4) of Arabidopsis thaliana (Mouse-ear cress).